A 154-amino-acid chain; its full sequence is Cold shock domain-containing protein C2 (154 aa).

Phosphoserine is present on serine 19. The interval 38–62 (GGGIAPRDLPSPLPTKRTRTYSATA) is disordered. In terms of domain architecture, CSD spans 69–136 (VFKGVCKQFS…KFQAVEVVLT (68 aa)).

Its subcellular location is the nucleus. The protein localises to the cytoplasm. Its function is as follows. RNA-binding factor which binds specifically to the very 3'-UTR ends of both histone H1 and H3.3 mRNAs, encompassing the polyadenylation signal. Might play a central role in the negative regulation of histone variant synthesis in the developing brain. The chain is Cold shock domain-containing protein C2 (Csdc2) from Mus musculus (Mouse).